Reading from the N-terminus, the 209-residue chain is Dual-specificity protein phosphatase SDP1 (209 aa).

Residues 1–11 (MNIYTSPTRTP) show a composition bias toward polar residues. The segment at 1–43 (MNIYTSPTRTPNIAPKSGQRPSLPMLATDERSTDKESPNEDRE) is disordered. A compositionally biased stretch (basic and acidic residues) spans 28-43 (TDERSTDKESPNEDRE). Cysteine 47 and cysteine 142 are disulfide-bonded. A Tyrosine-protein phosphatase domain is found at 59–196 (GPLLVLPEKI…LMEWEVALNA (138 aa)). Position 111 (histidine 111) interacts with 4-O-phospho-L-tyrosine. The Phosphocysteine intermediate role is filled by cysteine 140.

The protein belongs to the protein-tyrosine phosphatase family. Non-receptor class dual specificity subfamily.

It carries out the reaction O-phospho-L-tyrosyl-[protein] + H2O = L-tyrosyl-[protein] + phosphate. Mediates dephosphorylation of MAPK substrates such as SLT2, acquiring enhanced catalytic activity under oxidative conditions. The sequence is that of Dual-specificity protein phosphatase SDP1 (SDP1) from Saccharomyces cerevisiae (strain ATCC 204508 / S288c) (Baker's yeast).